The following is a 128-amino-acid chain: 3-aminoacrylate deaminase RutC (128 aa).

The protein belongs to the RutC family. In terms of assembly, homotrimer.

It catalyses the reaction (Z)-3-aminoacrylate + H2O + H(+) = 3-oxopropanoate + NH4(+). Involved in pyrimidine catabolism. Catalyzes the deamination of 3-aminoacrylate to malonic semialdehyde, a reaction that can also occur spontaneously. RutC may facilitate the reaction and modulate the metabolic fitness, rather than catalyzing essential functions. This is 3-aminoacrylate deaminase RutC from Escherichia coli O111:H- (strain 11128 / EHEC).